Here is a 230-residue protein sequence, read N- to C-terminus: Magnesium-protoporphyrin O-methyltransferase (230 aa).

This sequence belongs to the class I-like SAM-binding methyltransferase superfamily. Magnesium protoporphyrin O-methyltransferase family.

It catalyses the reaction Mg-protoporphyrin IX + S-adenosyl-L-methionine = Mg-protoporphyrin IX 13-monomethyl ester + S-adenosyl-L-homocysteine. Its pathway is porphyrin-containing compound metabolism; chlorophyll biosynthesis (light-independent). Converts Mg-protoporphyrin IX to Mg-protoporphyrin IX methylester using S-adenosyl-L-methionine as a cofactor. The chain is Magnesium-protoporphyrin O-methyltransferase (chlM) from Synechocystis sp. (strain ATCC 27184 / PCC 6803 / Kazusa).